Reading from the N-terminus, the 295-residue chain is 4-hydroxybenzoate octaprenyltransferase (295 aa).

A run of 8 helical transmembrane segments spans residues 28–48 (AGWL…AGGF), 51–71 (WHLL…GCCV), 101–121 (ALGV…TTNA), 124–144 (IAWS…KRFV), 159–179 (IPMA…WLVL), 220–240 (VMAF…PFGL), 242–262 (WPLH…WRLI), and 274–294 (FTGN…GFAL).

Belongs to the UbiA prenyltransferase family. Mg(2+) serves as cofactor.

The protein localises to the cell inner membrane. It carries out the reaction all-trans-octaprenyl diphosphate + 4-hydroxybenzoate = 4-hydroxy-3-(all-trans-octaprenyl)benzoate + diphosphate. It participates in cofactor biosynthesis; ubiquinone biosynthesis. Catalyzes the prenylation of para-hydroxybenzoate (PHB) with an all-trans polyprenyl group. Mediates the second step in the final reaction sequence of ubiquinone-8 (UQ-8) biosynthesis, which is the condensation of the polyisoprenoid side chain with PHB, generating the first membrane-bound Q intermediate 3-octaprenyl-4-hydroxybenzoate. This chain is 4-hydroxybenzoate octaprenyltransferase, found in Paracidovorax citrulli (strain AAC00-1) (Acidovorax citrulli).